The following is a 771-amino-acid chain: Post-GPI attachment to proteins factor 6 (771 aa).

Residues 1-34 form the signal peptide; the sequence is MGRAGTGTGGEAVAAVVAGPLLLLLLARPPPASA. The Extracellular segment spans residues 35–545; that stretch reads GYSGKSEVGL…STAQTVAQQR (511 aa). A glycan (N-linked (GlcNAc...) asparagine) is linked at N144. Positions 322–343 are disordered; that stretch reads FNASSGLLSPSPDHQDLGRSGR. Positions 334–343 are enriched in basic and acidic residues; sequence DHQDLGRSGR. 2 N-linked (GlcNAc...) asparagine glycosylation sites follow: N407 and N431. The 37-residue stretch at 497-533 folds into the EGF-like domain; sequence PCLNDCGPYGQCLLLRRHSYLYASCSCKAGWRGWSCT. Cystine bridges form between C498/C508, C502/C521, and C523/C532. Residues 546–566 traverse the membrane as a helical segment; sequence AATLLLTLSNLMFLAPIAVSV. Residues 567–568 are Cytoplasmic-facing; it reads RR. A helical membrane pass occupies residues 569 to 589; sequence FFLVEASVYAYTMFFSTFYHA. The Extracellular segment spans residues 590–605; the sequence is CDQPGEAVLCILSYDT. The helical transmembrane segment at 606–626 threads the bilayer; that stretch reads LQYCDFLGSGAAIWVTILCMA. The Cytoplasmic portion of the chain corresponds to 627–629; sequence RLK. The helical transmembrane segment at 630 to 650 threads the bilayer; sequence TVLKYVLFLLGTLVIAMSLQL. The Extracellular portion of the chain corresponds to 651–653; the sequence is DRR. A helical membrane pass occupies residues 654–674; the sequence is GMWNMLGPCLFAFVIMASMWA. The Cytoplasmic segment spans residues 675–690; sequence YRCGHRRQCYPTSWQR. The chain crosses the membrane as a helical span at residues 691–711; it reads WAFYLLPGVSMASVGIAIYTS. The Extracellular segment spans residues 712-717; sequence MMTSDN. The helical transmembrane segment at 718-738 threads the bilayer; that stretch reads YYYTHSIWHILLAGSAALLLP. The Cytoplasmic portion of the chain corresponds to 739–771; that stretch reads PPDQPAEPWACSQKFPCHYQICKNDREELYAVT.

This sequence belongs to the TMEM8 family. Post-translationally, glycosylated. In terms of tissue distribution, expressed in pancreas, placenta, spleen, liver, kidney, bone marrow, peripheral blood leukocytes and tonsil.

Its subcellular location is the cell membrane. It localises to the lysosome membrane. It catalyses the reaction a 1,2-diacyl-sn-glycero-3-phosphocholine + H2O = a 1-acyl-sn-glycero-3-phosphocholine + a fatty acid + H(+). Functionally, involved in the lipid remodeling steps of GPI-anchor maturation. Lipid remodeling steps consist in the generation of 2 saturated fatty chains at the sn-2 position of GPI-anchor proteins (GPI-AP). Has phospholipase A2 activity that removes an acyl-chain at the sn-2 position of GPI-anchors during the remodeling of GPI. Required for the shedding of the GPI-AP CRIPTO, but not CFC1, at the cell surface. Shedding of CRIPTO modulates Nodal signaling by allowing soluble CRIPTO to act as a Nodal coreceptor on other cells. Also indirectly involved in the translocation of RAC1 from the cytosol to the plasma membrane by maintaining the steady state amount of CAV1-enriched plasma membrane subdomains, stabilizing RAC1 at the plasma membrane. In contrast to myomaker (TMEM8C), has no fusogenic activity. The protein is Post-GPI attachment to proteins factor 6 of Homo sapiens (Human).